Consider the following 188-residue polypeptide: MKHKVGILGGTFDPPHLAHLHMAEEAKAQLGLEKILFLPNKVPPHKQISGMASNEERVEMLQLMIEDRDSFEIDTRELMRTGKSYTYDTMRDMISEQPNTDFYFIIGGDMVEYLPKWYHIDDLVKMVTFVGVNRPLYQKEVPYDIVKINMPETAISSTEIRNDIEHAEAFLPEKVWSYIKEHQLYGKK.

It belongs to the NadD family.

It carries out the reaction nicotinate beta-D-ribonucleotide + ATP + H(+) = deamido-NAD(+) + diphosphate. The protein operates within cofactor biosynthesis; NAD(+) biosynthesis; deamido-NAD(+) from nicotinate D-ribonucleotide: step 1/1. Functionally, catalyzes the reversible adenylation of nicotinate mononucleotide (NaMN) to nicotinic acid adenine dinucleotide (NaAD). The polypeptide is Probable nicotinate-nucleotide adenylyltransferase (Listeria innocua serovar 6a (strain ATCC BAA-680 / CLIP 11262)).